Reading from the N-terminus, the 287-residue chain is Pyridoxal kinase PdxY (287 aa).

Substrate contacts are provided by residues S10 and 45–46 (TQ). ATP-binding positions include D112, A144, E149, K182, and 209-212 (RPLV). D224 provides a ligand contact to substrate.

It belongs to the pyridoxine kinase family. PdxY subfamily. As to quaternary structure, homodimer. Mg(2+) serves as cofactor.

It carries out the reaction pyridoxal + ATP = pyridoxal 5'-phosphate + ADP + H(+). The protein operates within cofactor metabolism; pyridoxal 5'-phosphate salvage; pyridoxal 5'-phosphate from pyridoxal: step 1/1. Pyridoxal kinase involved in the salvage pathway of pyridoxal 5'-phosphate (PLP). Catalyzes the phosphorylation of pyridoxal to PLP. The protein is Pyridoxal kinase PdxY of Escherichia coli (strain UTI89 / UPEC).